The sequence spans 101 residues: Small ribosomal subunit protein bS18c (101 aa).

Residues 1-19 (MDKSKRPFRKSKRSFRRRL) are compositionally biased toward basic residues. The tract at residues 1 to 23 (MDKSKRPFRKSKRSFRRRLPPIG) is disordered.

This sequence belongs to the bacterial ribosomal protein bS18 family. In terms of assembly, part of the 30S ribosomal subunit.

It localises to the plastid. It is found in the chloroplast. The polypeptide is Small ribosomal subunit protein bS18c (Ceratophyllum demersum (Rigid hornwort)).